A 148-amino-acid polypeptide reads, in one-letter code: uncharacterized protein (148 aa).

A signal peptide spans methionine 1–alanine 23. A disordered region spans residues glutamine 22–leucine 45.

This sequence to M.leprae ML2452.

This is an uncharacterized protein from Mycobacterium bovis (strain ATCC BAA-935 / AF2122/97).